The primary structure comprises 310 residues: MQAPPPEHCPGVESEQAGLVSACAGCPNQSICSDPSKKLEDPGKALVAAAMKDVKHKLLILSGKGGVGKSTVTTLLTRYLARSYPDNNFGVLDIDICGPSQPRLLGALGENVHQSGSGWSPVGIDDNVCLMSIGFLLGSVDDAVIWRGPKKNGMIRQFLSEVDWGNLDLLLLDTPPGTSDEHLSVVSYLRDDNAPESLHAIIVTTPQEVALLDVRKEINFCKKQRIPILGVIENMSSFRCGHCGNSSEIFPAKTGGAAAMCIEMDVPLLGSLPLDPLVTRSCDAGEDITAMRNETTEALATICSKIMSSL.

Positions 9, 23, 26, and 32 each coordinate [4Fe-4S] cluster. ATP is bound at residue G63 to S70. [4Fe-4S] cluster-binding residues include C240 and C243.

This sequence belongs to the Mrp/NBP35 ATP-binding proteins family. NUBP1/NBP35 subfamily. In terms of assembly, heterotetramer of 2 Nubp1 and 2 Nubp2 chains. Requires [4Fe-4S] cluster as cofactor.

Its subcellular location is the cytoplasm. In terms of biological role, component of the cytosolic iron-sulfur (Fe/S) protein assembly (CIA) machinery. Required for maturation of extramitochondrial Fe-S proteins. The Nubp1-Nubp2 heterotetramer forms a Fe-S scaffold complex, mediating the de novo assembly of an Fe-S cluster and its transfer to target apoproteins. The sequence is that of Cytosolic Fe-S cluster assembly factor Nubp1 homolog from Drosophila virilis (Fruit fly).